Here is a 155-residue protein sequence, read N- to C-terminus: Small ribosomal subunit protein bS16 (155 aa).

Positions 100–155 (EAGIPDPAPSTEEPAAVCEASAEMAGQPGEVEPAGAAAEPNSQEPEPEEEKPQVEA) are disordered. Residues 124-143 (AGQPGEVEPAGAAAEPNSQE) show a composition bias toward low complexity.

The protein belongs to the bacterial ribosomal protein bS16 family.

In Synechococcus sp. (strain JA-3-3Ab) (Cyanobacteria bacterium Yellowstone A-Prime), this protein is Small ribosomal subunit protein bS16.